A 106-amino-acid chain; its full sequence is uncharacterized protein (106 aa).

The next 4 helical transmembrane spans lie at 3 to 23 (WFLL…MKYI), 29 to 49 (KWPI…LSQA), 50 to 70 (MIVL…SIGV), and 82 to 102 (FQLS…GLRL).

The protein belongs to the drug/metabolite transporter (DMT) superfamily. Small multidrug resistance (SMR) (TC 2.A.7.1) family.

The protein resides in the cell membrane. This is an uncharacterized protein from Bacillus subtilis (strain 168).